A 319-amino-acid chain; its full sequence is MRTIAVLTSGGDAPGMNAAIRAVVRTGLEKGLKVMGIQRGYNGLINGEIFEMDTHSVSDIIQRGGTILRTARCEEFRTEQGREKAAKILKAFGIDGLVVIGGDGSFHGAQLLSKLGINTVGLPGTIDNDLAYTDYTIGFDTSINTVLDAINKLRDTSTSHERVSVVEVMGRNCGDIALYTGVAGGAESIIIPEKEYNADKLCKQILQGKLKGKMHNLVLLAEGVGGANELAKYIEEVTGIETRSTILGHIQRGGSPTCMDRILASRMAYKAVELLISGKSSRVVGIKNGKIIDMDIDEALAVERSFDQELYDIATILSK.

Residue Gly-11 participates in ATP binding. 21–25 (RAVVR) contributes to the ADP binding site. Residues 72 to 73 (RC) and 102 to 105 (GDGS) each bind ATP. Asp-103 is a Mg(2+) binding site. Position 125–127 (125–127 (TID)) interacts with substrate. Residue Asp-127 is the Proton acceptor of the active site. Arg-154 is a binding site for ADP. Substrate contacts are provided by residues Arg-162 and 169-171 (MGR). Residues 185-187 (GAE), Lys-211, and 213-215 (KMH) each bind ADP. Substrate contacts are provided by residues Glu-222, Arg-243, and 249-252 (HIQR).

The protein belongs to the phosphofructokinase type A (PFKA) family. ATP-dependent PFK group I subfamily. Prokaryotic clade 'B1' sub-subfamily. Homotetramer. It depends on Mg(2+) as a cofactor.

It is found in the cytoplasm. The catalysed reaction is beta-D-fructose 6-phosphate + ATP = beta-D-fructose 1,6-bisphosphate + ADP + H(+). It functions in the pathway carbohydrate degradation; glycolysis; D-glyceraldehyde 3-phosphate and glycerone phosphate from D-glucose: step 3/4. With respect to regulation, allosterically activated by ADP and other diphosphonucleosides, and allosterically inhibited by phosphoenolpyruvate. Functionally, catalyzes the phosphorylation of D-fructose 6-phosphate to fructose 1,6-bisphosphate by ATP, the first committing step of glycolysis. This is ATP-dependent 6-phosphofructokinase from Clostridium botulinum (strain ATCC 19397 / Type A).